Consider the following 129-residue polypeptide: Protein BEX2 (129 aa).

The tract at residues 1–37 (MESKVEQGVKNLNMENDHQEKEEKEEKPQDASKRDPI) is disordered. Positions 15–36 (ENDHQEKEEKEEKPQDASKRDP) are enriched in basic and acidic residues. An Omega-N-methylarginine modification is found at Arg-51. The tract at residues 118–122 (HHDHH) is his cluster. Cys-126 is a binding site for Zn(2+).

It belongs to the BEX family. In terms of assembly, interacts with LMO2, possibly leading to regulate the transcriptional activity of a DNA-binding complex containing LMO2. Interacts with OMP. Primarily localized to neuronal cells within several regions of the brain, including the olfactory epithelium, bulb, peri/paraventricular nuclei, suprachiasmatic nucleus, arcuate nucleus, median eminence, lateral hypothalamic area, thalamus, hippocampus and cerebellum (at protein level).

It is found in the cytoplasm. The protein localises to the nucleus. Regulator of mitochondrial apoptosis and G1 cell cycle. Regulates the level of PP2A regulatory subunit B and PP2A phosphatase activity. In absence of reductive stress, acts as a pseudosubstrate for the CRL2(FEM1B) complex: associates with FEM1B via zinc, thereby preventing association between FEM1B and its substrates. The protein is Protein BEX2 of Mus musculus (Mouse).